A 944-amino-acid chain; its full sequence is Neutral alpha-glucosidase AB (944 aa).

The signal sequence occupies residues 1 to 28; that stretch reads MAAVAAVAARRRRSWASLVLAFLGVCLG. A disulfide bridge connects residues Cys41 and Cys47. Position 52 is a phosphoserine (Ser52). The N-linked (GlcNAc...) asparagine glycan is linked to Asn97. A disordered region spans residues 181–238; the sequence is QRAPRVSQGSKDPAEGDGAQPEETPRDGDKPEETQGKAEKDEPGAWEETFKTHSDSKP. The segment covering 203–236 has biased composition (basic and acidic residues); that stretch reads ETPRDGDKPEETQGKAEKDEPGAWEETFKTHSDS. The substrate site is built by Asp283 and Asp429. The active-site Nucleophile is the Asp542. Arg602 contacts substrate. Residue Asp618 is the Proton donor of the active site. Cys633 and Cys644 are disulfide-bonded. His676 is a binding site for substrate.

Belongs to the glycosyl hydrolase 31 family. As to quaternary structure, heterodimer of a catalytic alpha subunit (GANAB) and a beta subunit (PRKCSH). Binds glycosylated PTPRC. In terms of tissue distribution, detected in placenta. Isoform 1 and isoform 2 are expressed in the kidney and liver.

The protein resides in the endoplasmic reticulum. The protein localises to the golgi apparatus. Its subcellular location is the melanosome. The enzyme catalyses N(4)-(alpha-D-Glc-(1-&gt;3)-alpha-D-Man-(1-&gt;2)-alpha-D-Man-(1-&gt;2)-alpha-D-Man-(1-&gt;3)-[alpha-D-Man-(1-&gt;2)-alpha-D-Man-(1-&gt;3)-[alpha-D-Man-(1-&gt;2)-alpha-D-Man-(1-&gt;6)]-alpha-D-Man-(1-&gt;6)]-beta-D-Man-(1-&gt;4)-beta-D-GlcNAc-(1-&gt;4)-beta-D-GlcNAc)-L-asparaginyl-[protein] + H2O = N(4)-(alpha-D-Man-(1-&gt;2)-alpha-D-Man-(1-&gt;2)-alpha-D-Man-(1-&gt;3)-[alpha-D-Man-(1-&gt;2)-alpha-D-Man-(1-&gt;3)-[alpha-D-Man-(1-&gt;2)-alpha-D-Man-(1-&gt;6)]-alpha-D-Man-(1-&gt;6)]-beta-D-Man-(1-&gt;4)-beta-D-GlcNAc-(1-&gt;4)-beta-D-GlcNAc)-L-asparaginyl-[protein] (N-glucan mannose isomer 9A1,2,3B1,2,3) + beta-D-glucose. It carries out the reaction N(4)-(alpha-D-Glc-(1-&gt;3)-alpha-D-Glc-(1-&gt;3)-alpha-D-Man-(1-&gt;2)-alpha-D-Man-(1-&gt;2)-alpha-D-Man-(1-&gt;3)-[alpha-D-Man-(1-&gt;2)-alpha-D-Man-(1-&gt;3)-[alpha-D-Man-(1-&gt;2)-alpha-D-Man-(1-&gt;6)]-alpha-D-Man-(1-&gt;6)]-beta-D-Man-(1-&gt;4)-beta-D-GlcNAc-(1-&gt;4)-beta-D-GlcNAc)-L-asparaginyl-[protein] + H2O = N(4)-(alpha-D-Glc-(1-&gt;3)-alpha-D-Man-(1-&gt;2)-alpha-D-Man-(1-&gt;2)-alpha-D-Man-(1-&gt;3)-[alpha-D-Man-(1-&gt;2)-alpha-D-Man-(1-&gt;3)-[alpha-D-Man-(1-&gt;2)-alpha-D-Man-(1-&gt;6)]-alpha-D-Man-(1-&gt;6)]-beta-D-Man-(1-&gt;4)-beta-D-GlcNAc-(1-&gt;4)-beta-D-GlcNAc)-L-asparaginyl-[protein] + beta-D-glucose. Its pathway is glycan metabolism; N-glycan metabolism. Inhibited by deoxynojirimycin. In terms of biological role, catalytic subunit of glucosidase II that cleaves sequentially the 2 innermost alpha-1,3-linked glucose residues from the Glc(2)Man(9)GlcNAc(2) oligosaccharide precursor of immature glycoproteins. Required for PKD1/Polycystin-1 and PKD2/Polycystin-2 maturation and localization to the cell surface and cilia. This Homo sapiens (Human) protein is Neutral alpha-glucosidase AB.